Reading from the N-terminus, the 309-residue chain is GDP-6-deoxy-D-mannose reductase (309 aa).

Residues 11–12 (FV), arginine 32, 47–48 (DI), and 71–73 (AKS) each bind NADP(+). A substrate-binding site is contributed by 114 to 115 (SS). Tyrosine 140 is a binding site for NADP(+). Substrate-binding positions include asparagine 169, aspartate 183, arginine 209, and 269 to 272 (RPSE).

Belongs to the NAD(P)-dependent epimerase/dehydratase family. GDP-6-deoxy-D-mannose reductase subfamily.

The enzyme catalyses GDP-alpha-D-rhamnose + NAD(+) = GDP-4-dehydro-alpha-D-rhamnose + NADH + H(+). It carries out the reaction GDP-alpha-D-rhamnose + NADP(+) = GDP-4-dehydro-alpha-D-rhamnose + NADPH + H(+). In terms of biological role, reductase that catalyzes the conversion of GDP-6-deoxy-D-mannose to GDP-4-dehydro-6-deoxy-D-mannose (GDP-D-rhamnose). This chain is GDP-6-deoxy-D-mannose reductase (rmd), found in Aneurinibacillus thermoaerophilus.